The sequence spans 304 residues: Nod factor export ATP-binding protein I (304 aa).

The ABC transporter domain occupies 6–236; sequence IDFRNVEKRF…EIGCDVIEIY (231 aa). Residue 38 to 45 coordinates ATP; it reads GPNGAGKT.

It belongs to the ABC transporter superfamily. Lipooligosaccharide exporter (TC 3.A.1.102) family. As to quaternary structure, the complex is composed of two ATP-binding proteins (NodI) and two transmembrane proteins (NodJ).

It localises to the cell inner membrane. Functionally, part of the ABC transporter complex NodIJ involved in the export of the nodulation factors (Nod factors), the bacterial signal molecules that induce symbiosis and subsequent nodulation induction. Nod factors are LCO (lipo-chitin oligosaccharide), a modified beta-1,4-linked N-acetylglucosamine oligosaccharide. This subunit is responsible for energy coupling to the transport system. In Burkholderia lata (strain ATCC 17760 / DSM 23089 / LMG 22485 / NCIMB 9086 / R18194 / 383), this protein is Nod factor export ATP-binding protein I.